Consider the following 337-residue polypeptide: 2-oxoglutarate receptor 1 (337 aa).

At 1-34 (MNEPLDYLANASDFPDYAAAFGNCTDENIPLKMH) the chain is on the extracellular side. 2 N-linked (GlcNAc...) asparagine glycosylation sites follow: asparagine 10 and asparagine 23. Residues 35 to 55 (YLPVIYGIIFLVGFPGNAVVI) traverse the membrane as a helical segment. At 56–69 (STYIFKMRPWKSST) the chain is on the cytoplasmic side. Residues 70 to 90 (IIMLNLACTDLLYLTSLPFLI) traverse the membrane as a helical segment. The Extracellular segment spans residues 91–116 (HYYASGENWIFGDFMCKFIRFSFHFN). Cysteine 106 and cysteine 183 form a disulfide bridge. The helical transmembrane segment at 117–137 (LYSSILFLTCFSIFRYCVIIH) threads the bilayer. Residues 138 to 151 (PMSCFSIHKTRCAV) are Cytoplasmic-facing. Residues 152-172 (VACAVVWIISLVAVIPMTFLI) traverse the membrane as a helical segment. The Extracellular segment spans residues 173–201 (TSTNRTNRSACLDLTSSDELNTIKWYNLI). N-linked (GlcNAc...) asparagine glycans are attached at residues asparagine 176 and asparagine 179. Residues 202-222 (LTATTFCLPLVIVTLCYTTII) traverse the membrane as a helical segment. Over 223-242 (HTLTHGLQTDSCLKQKARRL) the chain is Cytoplasmic. The chain crosses the membrane as a helical span at residues 243 to 263 (TILLLLAFYVCFLPFHILRVI). Residues 264-284 (RIESRLLSISCSIENQIHEAY) lie on the Extracellular side of the membrane. The helical transmembrane segment at 285–305 (IVSRPLAALNTFGNLLLYVVV) threads the bilayer. Topologically, residues 306 to 337 (SDNFQQAVCSTVRCKVSGNLEQAKKISYSNNP) are cytoplasmic.

This sequence belongs to the G-protein coupled receptor 1 family. In terms of tissue distribution, detected in kidney and, to a lower extent, in placenta. Not detected in brain tissues including the frontal cortex, caudate putamen, thalamus, hypothalamus, hippocampus or pons.

Its subcellular location is the cell membrane. Functionally, g protein-coupled receptor for dicarboxylates and amino dicarboxylates. Receptor for itaconate, a metabolite produced by myeloid lineages. In the respiratory epithelium, couples the binding of itaconate to the activation of GNA11 and downstream intracellular Ca(2+) release, leading to mucocilliary clearance of airborne pathogens. Receptor for leukotriene E4 (LTE4) produced by mast cells upon allergic inflammation. Binds with high affinity to LTE4 and elicits mucin release from pulmonary epithelium in response to airborne fungi allergens. Regulates mucin-producing goblet cell homeostasis. Receptor for alpha-ketoglutarate produced by proximal tubule renal cells upon metabolic alkalosis. In an intrarenal paracrine signaling pathway, binds alpha-ketoglutarate and drives transepithelial salt reabsorption and bicarbonate secretion by SLC26A4/pendrin-positive intercalated cells. This Homo sapiens (Human) protein is 2-oxoglutarate receptor 1 (OXGR1).